Consider the following 553-residue polypeptide: Pumilio domain-containing protein 5 (553 aa).

Pumilio repeat units follow at residues 146–184, 185–223, 224–260, 261–296, 297–335, 347–384, 386–421, and 432–472; these read DVVS…VLFD, KLTE…RLVR, KMCD…KLVE, KISS…SFFV, KFLC…HCFN, SVAR…TIIE, CLLR…EMMD, and ETNR…KMVA. The interval 499–514 is RNA-binding; it reads FSSGKKIIESLQKLNV.

Detected in differentiating oocytes with highest levels observed in developing ooctyes in the distal portion of the proximal gonad.

It localises to the cytoplasm. The protein resides in the P-body. RNA-binding protein that binds to the consensus sequence 5'-CUCUGUAUCUUGU-3' in mRNA 3'-UTRs and modulates mRNA expression and stability. Functions redundantly with puf-6 and puf-7 in oocyte formation and organization, early embryonic cell divisions, and repression of expression of glp-1 and other maternal mRNAs in late oogenesis. This Caenorhabditis elegans protein is Pumilio domain-containing protein 5.